The sequence spans 85 residues: MAGLQGWQLVIIILLAILLFAAPKLPAMARNLGQSMRIFSSEVKQMRTEGKDAKDERSGTGSTAADEPVEGRVVDRDETDPRDQR.

A helical transmembrane segment spans residues 1-21; it reads MAGLQGWQLVIIILLAILLFA. The tract at residues 43 to 85 is disordered; sequence VKQMRTEGKDAKDERSGTGSTAADEPVEGRVVDRDETDPRDQR. Basic and acidic residues-rich tracts occupy residues 44-58 and 69-85; these read KQMR…DERS and VEGR…RDQR.

Belongs to the TatA/E family. As to quaternary structure, the Tat system comprises two distinct complexes: a TatABC complex, containing multiple copies of TatA, TatB and TatC subunits, and a separate TatA complex, containing only TatA subunits. Substrates initially bind to the TatABC complex, which probably triggers association of the separate TatA complex to form the active translocon.

Its subcellular location is the cell membrane. In terms of biological role, part of the twin-arginine translocation (Tat) system that transports large folded proteins containing a characteristic twin-arginine motif in their signal peptide across membranes. TatA could form the protein-conducting channel of the Tat system. The polypeptide is Sec-independent protein translocase protein TatA (Micrococcus luteus (strain ATCC 4698 / DSM 20030 / JCM 1464 / CCM 169 / CCUG 5858 / IAM 1056 / NBRC 3333 / NCIMB 9278 / NCTC 2665 / VKM Ac-2230) (Micrococcus lysodeikticus)).